A 220-amino-acid polypeptide reads, in one-letter code: Deoxyribose-phosphate aldolase (220 aa).

The Proton donor/acceptor role is filled by aspartate 89. Lysine 151 serves as the catalytic Schiff-base intermediate with acetaldehyde. Lysine 180 functions as the Proton donor/acceptor in the catalytic mechanism.

It belongs to the DeoC/FbaB aldolase family. DeoC type 1 subfamily.

It is found in the cytoplasm. The enzyme catalyses 2-deoxy-D-ribose 5-phosphate = D-glyceraldehyde 3-phosphate + acetaldehyde. The protein operates within carbohydrate degradation; 2-deoxy-D-ribose 1-phosphate degradation; D-glyceraldehyde 3-phosphate and acetaldehyde from 2-deoxy-alpha-D-ribose 1-phosphate: step 2/2. Functionally, catalyzes a reversible aldol reaction between acetaldehyde and D-glyceraldehyde 3-phosphate to generate 2-deoxy-D-ribose 5-phosphate. This Mycoplasmopsis pulmonis (strain UAB CTIP) (Mycoplasma pulmonis) protein is Deoxyribose-phosphate aldolase.